The primary structure comprises 346 residues: Protein RecA (346 aa).

67-74 (GPESSGKT) contributes to the ATP binding site.

It belongs to the RecA family.

The protein localises to the cytoplasm. Its function is as follows. Can catalyze the hydrolysis of ATP in the presence of single-stranded DNA, the ATP-dependent uptake of single-stranded DNA by duplex DNA, and the ATP-dependent hybridization of homologous single-stranded DNAs. It interacts with LexA causing its activation and leading to its autocatalytic cleavage. The protein is Protein RecA of Mycobacterium marinum (strain ATCC BAA-535 / M).